The chain runs to 109 residues: Iron-sulfur cluster assembly protein CyaY (109 aa).

It belongs to the frataxin family.

Its function is as follows. Involved in iron-sulfur (Fe-S) cluster assembly. May act as a regulator of Fe-S biogenesis. The chain is Iron-sulfur cluster assembly protein CyaY from Shewanella baltica (strain OS155 / ATCC BAA-1091).